Here is a 77-residue protein sequence, read N- to C-terminus: Cytoplasmic envelopment protein 3 (77 aa).

Gly-2 carries N-myristoyl glycine; by host lipidation.

It belongs to the herpesviridae cytoplasmic envelopment protein 3 family. As to quaternary structure, interacts with cytoplasmic envelopment protein 2; this interaction is essential for the proper localization of each protein to the assembly complex and thus for the production of infectious virus. In terms of processing, myristoylation and palmitoylation (probably on one or more of the nearby cysteines at the N-terminus) enable membrane-binding and Golgi apparatus-specific targeting and are essential for efficient packaging. Post-translationally, phosphorylated. Phosphorylation does not seem to be required for recycling to the host Golgi apparatus. Packaging is selective for underphosphorylated forms.

The protein resides in the virion tegument. It localises to the virion membrane. Its subcellular location is the host cell membrane. It is found in the host Golgi apparatus membrane. Functionally, plays an important role in the cytoplasmic envelopment of tegument proteins and capsids during the assembly and egress processes. Also participates in viral entry at the fusion step probably by regulating the core fusion machinery. This is Cytoplasmic envelopment protein 3 (U71) from Human herpesvirus 6A (strain Uganda-1102) (HHV-6 variant A).